We begin with the raw amino-acid sequence, 236 residues long: Phosphoribosylaminoimidazole-succinocarboxamide synthase (236 aa).

It belongs to the SAICAR synthetase family.

It carries out the reaction 5-amino-1-(5-phospho-D-ribosyl)imidazole-4-carboxylate + L-aspartate + ATP = (2S)-2-[5-amino-1-(5-phospho-beta-D-ribosyl)imidazole-4-carboxamido]succinate + ADP + phosphate + 2 H(+). It participates in purine metabolism; IMP biosynthesis via de novo pathway; 5-amino-1-(5-phospho-D-ribosyl)imidazole-4-carboxamide from 5-amino-1-(5-phospho-D-ribosyl)imidazole-4-carboxylate: step 1/2. This chain is Phosphoribosylaminoimidazole-succinocarboxamide synthase, found in Rickettsia felis (strain ATCC VR-1525 / URRWXCal2) (Rickettsia azadi).